The primary structure comprises 107 residues: UPF0102 protein CTN_0433 (107 aa).

This sequence belongs to the UPF0102 family.

The protein is UPF0102 protein CTN_0433 of Thermotoga neapolitana (strain ATCC 49049 / DSM 4359 / NBRC 107923 / NS-E).